The sequence spans 728 residues: Catalase-peroxidase (728 aa).

Positions 91–218 (WHSAGTYRTA…LAAVQMGLIY (128 aa)) form a cross-link, tryptophyl-tyrosyl-methioninium (Trp-Tyr) (with M-244). Histidine 92 functions as the Proton acceptor in the catalytic mechanism. The segment at residues 218-244 (YVNPEGPDGNPDPVAAARDIRDTFARM) is a cross-link (tryptophyl-tyrosyl-methioninium (Tyr-Met) (with W-91)). A heme b-binding site is contributed by histidine 259.

The protein belongs to the peroxidase family. Peroxidase/catalase subfamily. As to quaternary structure, homodimer or homotetramer. It depends on heme b as a cofactor. In terms of processing, formation of the three residue Trp-Tyr-Met cross-link is important for the catalase, but not the peroxidase activity of the enzyme.

The catalysed reaction is H2O2 + AH2 = A + 2 H2O. The enzyme catalyses 2 H2O2 = O2 + 2 H2O. In terms of biological role, bifunctional enzyme with both catalase and broad-spectrum peroxidase activity. This Burkholderia mallei (strain NCTC 10247) protein is Catalase-peroxidase.